The primary structure comprises 367 residues: MDAEQINQIGATLADLSARTADLRRYLDYDAKAERLRTVNASLEDPNVWNDPKKAQELGREKKSLDDVVVTLDRLTSGLSDNTELYEMSKEDGDMDGLQSIADDAAALETDIKQLEFRRMFNNPADPLNAFVDIQAGAGGTEACDWASMLLRQYLKYAERKGFKTQIEDETPGDTAGIKGATIKVEGDYAFGLLRTETGVHRLVRKSPFDSSGGRHTSFASIFVYPEIDDSIEIEINPADVRTDTFRASGAGGQHINKTDSAVRLTHIPTGIVVQCQDGRSQHSNRDVAWKRLRSRLYDHEMRKRQEEQQKLEDSKTDVGWGHQIRSYVLDNSRIKDLRTNVEVSATQKVLDGDLDVFIEASLKQGV.

Residue Gln-254 is modified to N5-methylglutamine.

It belongs to the prokaryotic/mitochondrial release factor family. In terms of processing, methylated by PrmC. Methylation increases the termination efficiency of RF2.

Its subcellular location is the cytoplasm. Functionally, peptide chain release factor 2 directs the termination of translation in response to the peptide chain termination codons UGA and UAA. This chain is Peptide chain release factor 2, found in Variovorax paradoxus (strain S110).